The primary structure comprises 314 residues: Acetyl-coenzyme A carboxylase carboxyl transferase subunit alpha (314 aa).

In terms of domain architecture, CoA carboxyltransferase C-terminal spans 32 to 289 (EIDMLEASLK…KKMFLKHLNE (258 aa)).

The protein belongs to the AccA family. As to quaternary structure, acetyl-CoA carboxylase is a heterohexamer composed of biotin carboxyl carrier protein (AccB), biotin carboxylase (AccC) and two subunits each of ACCase subunit alpha (AccA) and ACCase subunit beta (AccD).

The protein resides in the cytoplasm. The catalysed reaction is N(6)-carboxybiotinyl-L-lysyl-[protein] + acetyl-CoA = N(6)-biotinyl-L-lysyl-[protein] + malonyl-CoA. It participates in lipid metabolism; malonyl-CoA biosynthesis; malonyl-CoA from acetyl-CoA: step 1/1. In terms of biological role, component of the acetyl coenzyme A carboxylase (ACC) complex. First, biotin carboxylase catalyzes the carboxylation of biotin on its carrier protein (BCCP) and then the CO(2) group is transferred by the carboxyltransferase to acetyl-CoA to form malonyl-CoA. In Staphylococcus epidermidis (strain ATCC 12228 / FDA PCI 1200), this protein is Acetyl-coenzyme A carboxylase carboxyl transferase subunit alpha.